A 203-amino-acid polypeptide reads, in one-letter code: Endo-type membrane-bound lytic murein transglycosylase A (203 aa).

The N-terminal stretch at 1-15 (MKLRWLLILVVFLAG) is a signal peptide. A lipid anchor (N-palmitoyl cysteine) is attached at Cys16. Cys16 carries the S-diacylglycerol cysteine lipid modification.

It belongs to the transglycosylase Slt family.

The protein localises to the cell outer membrane. The enzyme catalyses Endolytic cleavage of the (1-&gt;4)-beta-glycosidic linkage between N-acetylmuramic acid (MurNAc) and N-acetylglucosamine (GlcNAc) residues in peptidoglycan with concomitant formation of a 1,6-anhydrobond in the MurNAc residue.. In terms of biological role, murein-degrading enzyme. May play a role in recycling of muropeptides during cell elongation and/or cell division. Preferentially cleaves at a distance of more than two disaccharide units from the ends of the glycan chain. The polypeptide is Endo-type membrane-bound lytic murein transglycosylase A (Klebsiella pneumoniae subsp. pneumoniae (strain ATCC 700721 / MGH 78578)).